An 872-amino-acid polypeptide reads, in one-letter code: HTH-type transcriptional regulator AlkS (872 aa).

Residues 805 to 870 (LTNTQSTITI…RAVSEARLRG (66 aa)) enclose the HTH luxR-type domain. The segment at residues 829–848 (NKEIAERLLITEDTVKWHLK) is a DNA-binding region (H-T-H motif).

The protein operates within hydrocarbon metabolism; alkane degradation. Its function is as follows. This protein activates the expression of AlkB1 in the presence of alkanes. In Alcanivorax borkumensis (strain ATCC 700651 / DSM 11573 / NCIMB 13689 / SK2), this protein is HTH-type transcriptional regulator AlkS (alkS).